A 158-amino-acid chain; its full sequence is Crossover junction endodeoxyribonuclease RuvC (158 aa).

Active-site residues include D7, E67, and D139. Residues D7, E67, and D139 each coordinate Mg(2+).

This sequence belongs to the RuvC family. In terms of assembly, homodimer which binds Holliday junction (HJ) DNA. The HJ becomes 2-fold symmetrical on binding to RuvC with unstacked arms; it has a different conformation from HJ DNA in complex with RuvA. In the full resolvosome a probable DNA-RuvA(4)-RuvB(12)-RuvC(2) complex forms which resolves the HJ. Requires Mg(2+) as cofactor.

It localises to the cytoplasm. The enzyme catalyses Endonucleolytic cleavage at a junction such as a reciprocal single-stranded crossover between two homologous DNA duplexes (Holliday junction).. Its function is as follows. The RuvA-RuvB-RuvC complex processes Holliday junction (HJ) DNA during genetic recombination and DNA repair. Endonuclease that resolves HJ intermediates. Cleaves cruciform DNA by making single-stranded nicks across the HJ at symmetrical positions within the homologous arms, yielding a 5'-phosphate and a 3'-hydroxyl group; requires a central core of homology in the junction. The consensus cleavage sequence is 5'-(A/T)TT(C/G)-3'. Cleavage occurs on the 3'-side of the TT dinucleotide at the point of strand exchange. HJ branch migration catalyzed by RuvA-RuvB allows RuvC to scan DNA until it finds its consensus sequence, where it cleaves and resolves the cruciform DNA. The sequence is that of Crossover junction endodeoxyribonuclease RuvC from Prochlorococcus marinus (strain MIT 9211).